Reading from the N-terminus, the 300-residue chain is Glutamyl-Q tRNA(Asp) synthetase (300 aa).

L-glutamate-binding positions include 14-18 (RFAPT) and Glu-50. The short motif at 17 to 27 (PTPSGFLHFGS) is the 'HIGH' region element. Zn(2+) contacts are provided by Cys-106, Cys-108, Tyr-120, and Cys-124. 2 residues coordinate L-glutamate: Tyr-177 and Arg-195. The 'KMSKS' region signature appears at 233–237 (KLGKS). Residue Lys-236 coordinates ATP.

This sequence belongs to the class-I aminoacyl-tRNA synthetase family. GluQ subfamily. The cofactor is Zn(2+).

Functionally, catalyzes the tRNA-independent activation of glutamate in presence of ATP and the subsequent transfer of glutamate onto a tRNA(Asp). Glutamate is transferred on the 2-amino-5-(4,5-dihydroxy-2-cyclopenten-1-yl) moiety of the queuosine in the wobble position of the QUC anticodon. This is Glutamyl-Q tRNA(Asp) synthetase from Pseudomonas putida (strain ATCC 700007 / DSM 6899 / JCM 31910 / BCRC 17059 / LMG 24140 / F1).